Reading from the N-terminus, the 569-residue chain is Potassium-transporting ATPase potassium-binding subunit (569 aa).

10 helical membrane-spanning segments follow: residues 11-31 (LLLA…ACVF), 64-84 (LAYT…LYGI), 135-155 (AGLA…ALAV), 179-199 (LYLL…MGIP), 258-278 (FNIL…GKMV), 285-305 (WALI…VYIA), 384-404 (GLYG…LMVG), 423-443 (MLAV…AAVL), 490-510 (LGIS…AIAG), and 531-551 (LFVG…YFPA).

The protein belongs to the KdpA family. In terms of assembly, the system is composed of three essential subunits: KdpA, KdpB and KdpC.

The protein resides in the cell inner membrane. Part of the high-affinity ATP-driven potassium transport (or Kdp) system, which catalyzes the hydrolysis of ATP coupled with the electrogenic transport of potassium into the cytoplasm. This subunit binds the periplasmic potassium ions and delivers the ions to the membrane domain of KdpB through an intramembrane tunnel. The chain is Potassium-transporting ATPase potassium-binding subunit from Allorhizobium ampelinum (strain ATCC BAA-846 / DSM 112012 / S4) (Agrobacterium vitis (strain S4)).